Reading from the N-terminus, the 151-residue chain is Inactive oocyte-specific homeobox protein 2 (151 aa).

The segment at 1 to 97 (MAEGPSLHPK…PMASRKFRKE (97 aa)) is disordered. Residues 37–54 (MRQSPLVTPGSTTKSSLS) show a composition bias toward polar residues.

The protein belongs to the paired homeobox family. Obox subfamily. As to expression, specifically expressed in oocytes and early embryos.

In contrast to other Obox family proteins, displays a truncated homeobox domain and does not bind DNA. This chain is Inactive oocyte-specific homeobox protein 2, found in Mus musculus (Mouse).